The following is a 49-amino-acid chain: uncharacterized protein (49 aa).

Residues 17–39 form a helical membrane-spanning segment; the sequence is LLVFDTSLYIPPFMLSFIGYSLS.

Its subcellular location is the membrane. This is an uncharacterized protein from Saccharomyces cerevisiae (strain ATCC 204508 / S288c) (Baker's yeast).